The following is a 185-amino-acid chain: V-type proton ATPase subunit E (185 aa).

Belongs to the V-ATPase E subunit family.

In terms of biological role, produces ATP from ADP in the presence of a proton gradient across the membrane. The protein is V-type proton ATPase subunit E of Deinococcus deserti (strain DSM 17065 / CIP 109153 / LMG 22923 / VCD115).